Here is a 256-residue protein sequence, read N- to C-terminus: Probable aquaporin TIP5-1 (256 aa).

Residue methionine 1 is modified to N-acetylmethionine. The next 5 membrane-spanning stretches (helical) occupy residues 24 to 44 (CYVS…GSVM), 57 to 77 (PFGV…SVYI), 89 to 109 (AVTF…MFYW), 144 to 164 (FGAS…VFTA), and 171 to 191 (LPLA…VLAA). Positions 87–89 (NPA) match the NPA 1 motif. Positions 200 to 202 (NPA) match the NPA 2 motif. Residues 222–242 (VGPLLGGATAALVYDNVVVPV) form a helical membrane-spanning segment. Serine 249 bears the Phosphoserine mark.

This sequence belongs to the MIP/aquaporin (TC 1.A.8) family. TIP (TC 1.A.8.10) subfamily.

It localises to the membrane. In terms of biological role, potential aquaporin, which may facilitate the transport of water and small neutral solutes across cell membranes. The polypeptide is Probable aquaporin TIP5-1 (TIP5-1) (Arabidopsis thaliana (Mouse-ear cress)).